A 584-amino-acid polypeptide reads, in one-letter code: Kelch domain-containing protein 4 (584 aa).

Over residues M1–K10 the composition is skewed to basic residues. Disordered regions lie at residues M1–E33 and K50–L69. Residues G11 to K24 are compositionally biased toward basic and acidic residues. 5 Kelch repeats span residues E77–Q129, Q133–R187, Q188–V238, S243–S289, and Q308–K361. 3 disordered regions span residues K348–P381, S405–S433, and P482–E533. Position 418 is a phosphoserine (S418). The Kelch 6 repeat unit spans residues L443–E494. Positions W487–A519 are enriched in acidic residues. Over residues D520–E533 the composition is skewed to basic and acidic residues.

In Mus musculus (Mouse), this protein is Kelch domain-containing protein 4 (Klhdc4).